We begin with the raw amino-acid sequence, 335 residues long: Pyridoxal 5'-phosphate synthase subunit PdxS (335 aa).

Residue D30 coordinates D-ribose 5-phosphate. The active-site Schiff-base intermediate with D-ribose 5-phosphate is the K87. G159 is a binding site for D-ribose 5-phosphate. Residue R171 coordinates D-glyceraldehyde 3-phosphate. Residues G257 and 278–279 (GS) each bind D-ribose 5-phosphate.

Belongs to the PdxS/SNZ family. In the presence of PdxT, forms a dodecamer of heterodimers.

The catalysed reaction is aldehydo-D-ribose 5-phosphate + D-glyceraldehyde 3-phosphate + L-glutamine = pyridoxal 5'-phosphate + L-glutamate + phosphate + 3 H2O + H(+). It functions in the pathway cofactor biosynthesis; pyridoxal 5'-phosphate biosynthesis. Functionally, catalyzes the formation of pyridoxal 5'-phosphate from ribose 5-phosphate (RBP), glyceraldehyde 3-phosphate (G3P) and ammonia. The ammonia is provided by the PdxT subunit. Can also use ribulose 5-phosphate and dihydroxyacetone phosphate as substrates, resulting from enzyme-catalyzed isomerization of RBP and G3P, respectively. The sequence is that of Pyridoxal 5'-phosphate synthase subunit PdxS from Thermococcus kodakarensis (strain ATCC BAA-918 / JCM 12380 / KOD1) (Pyrococcus kodakaraensis (strain KOD1)).